The chain runs to 31 residues: Delta-conotoxin-like ErVIA (31 aa).

The propeptide occupies 1 to 4 (LNKR). Cystine bridges form between Cys5–Cys21, Cys12–Cys25, and Cys20–Cys29.

This sequence belongs to the conotoxin O1 superfamily. In terms of tissue distribution, expressed by the venom duct.

The protein localises to the secreted. Functionally, this toxin activates voltage-gated sodium channels. It shifts the voltage-dependence of activation to more hyperpolarized potentials but has only little effect on channel inactivation. It is active on Nav1.3/SCN3A (EC(50)=3.98 nM), Nav1.4/SCN4A (EC(50)=4.99 nM), Nav1.6/SCN8A (EC(50)=1.27 nM) and Nav1.7/SCN9A (EC(50)=2.42 nM) voltage-gated sodium channels. In vivo, it induces nocifensive or pain-like behaviors in mice when injected intraplantarly. This chain is Delta-conotoxin-like ErVIA, found in Conus eburneus (Ivory cone).